The primary structure comprises 460 residues: tRNA modification GTPase MnmE (460 aa).

Residues Arg-22, Glu-87, and Arg-126 each coordinate (6S)-5-formyl-5,6,7,8-tetrahydrofolate. Positions 222–381 (GLKTAIIGKP…LENTIYNLVF (160 aa)) constitute a TrmE-type G domain. Asn-232 serves as a coordination point for K(+). GTP-binding positions include 232–237 (NVGKSS), 251–257 (TDIPGTT), and 276–279 (DTAG). Residue Ser-236 participates in Mg(2+) binding. K(+)-binding residues include Thr-251, Ile-253, and Thr-256. Thr-257 lines the Mg(2+) pocket. Lys-460 contributes to the (6S)-5-formyl-5,6,7,8-tetrahydrofolate binding site.

This sequence belongs to the TRAFAC class TrmE-Era-EngA-EngB-Septin-like GTPase superfamily. TrmE GTPase family. Homodimer. Heterotetramer of two MnmE and two MnmG subunits. K(+) is required as a cofactor.

It is found in the cytoplasm. Its function is as follows. Exhibits a very high intrinsic GTPase hydrolysis rate. Involved in the addition of a carboxymethylaminomethyl (cmnm) group at the wobble position (U34) of certain tRNAs, forming tRNA-cmnm(5)s(2)U34. The protein is tRNA modification GTPase MnmE of Thermoanaerobacter pseudethanolicus (strain ATCC 33223 / 39E) (Clostridium thermohydrosulfuricum).